A 430-amino-acid polypeptide reads, in one-letter code: Histidine--tRNA ligase (430 aa).

This sequence belongs to the class-II aminoacyl-tRNA synthetase family. In terms of assembly, homodimer.

It localises to the cytoplasm. The enzyme catalyses tRNA(His) + L-histidine + ATP = L-histidyl-tRNA(His) + AMP + diphosphate + H(+). The polypeptide is Histidine--tRNA ligase (Acinetobacter baumannii (strain ATCC 17978 / DSM 105126 / CIP 53.77 / LMG 1025 / NCDC KC755 / 5377)).